The sequence spans 250 residues: Shieldin complex subunit 3 (250 aa).

The segment at 28–83 (QDFPTRPLSRFIPWFPYDGSKLPLRPKRSPPVISEEAAEDVKQYLTISEHDAKSHS) is sufficient for interaction with MAD2L2. Over residues 108–119 (LKEQTNSGNLGK) the composition is skewed to polar residues. The interval 108-129 (LKEQTNSGNLGKQSEKGKQHKR) is disordered.

Component of the shieldin complex, consisting of SHLD1, SHLD2, SHLD3 and MAD2L2/REV7. Within the complex, SHLD2 forms a scaffold which interacts with a SHLD3-MAD2L2 subcomplex via its N-terminus, and with SHLD1 via its C-terminus. Interacts with ASTE1.

The protein resides in the chromosome. Component of the shieldin complex, which plays an important role in repair of DNA double-stranded breaks (DSBs). During G1 and S phase of the cell cycle, the complex functions downstream of TP53BP1 to promote non-homologous end joining (NHEJ) and suppress DNA end resection. Mediates various NHEJ-dependent processes including immunoglobulin class-switch recombination, and fusion of unprotected telomeres. This chain is Shieldin complex subunit 3, found in Homo sapiens (Human).